An 81-amino-acid chain; its full sequence is Large ribosomal subunit protein bL31B (81 aa).

It belongs to the bacterial ribosomal protein bL31 family. Type B subfamily. As to quaternary structure, part of the 50S ribosomal subunit.

In Limosilactobacillus fermentum (strain NBRC 3956 / LMG 18251) (Lactobacillus fermentum), this protein is Large ribosomal subunit protein bL31B.